We begin with the raw amino-acid sequence, 245 residues long: Putative insertion sequence ATP-binding protein y4pL (245 aa).

106–113 (GPSGVGKS) contacts ATP.

It belongs to the IS21/IS1162 putative ATP-binding protein family.

The sequence is that of Putative insertion sequence ATP-binding protein y4pL from Sinorhizobium fredii (strain NBRC 101917 / NGR234).